The primary structure comprises 427 residues: Lactadherin (427 aa).

Positions 1–22 (MQFSRVLAALCGVLLCASGLFA) are cleaved as a signal peptide. EGF-like domains lie at 24 to 61 (SGDF…LVCN) and 64 to 108 (EKGP…IHCE). 3 disulfides stabilise this stretch: Cys28–Cys39, Cys33–Cys49, and Cys51–Cys60. Asn61 carries an N-linked (GlcNAc...) asparagine glycan. Disulfide bonds link Cys68–Cys79, Cys73–Cys96, Cys98–Cys107, Cys111–Cys267, Cys254–Cys258, and Cys272–Cys427. Residues 87–89 (RGD) carry the Cell attachment site motif. 2 F5/8 type C domains span residues 111 to 267 (CSTK…LLGC) and 272 to 427 (CSEP…LLGC). The N-linked (GlcNAc...) asparagine glycan is linked to Asn230. Residues Asn280 and Asn390 are each glycosylated (N-linked (GlcNAc...) asparagine).

Spleen, lung, heart, brain and muscle.

The protein resides in the membrane. Its subcellular location is the secreted. It is found in the cytoplasmic vesicle. It localises to the secretory vesicle. The protein localises to the acrosome membrane. Its function is as follows. Contributes to phagocytic removal of apoptotic cells in many tissues. Plays an important role in the maintenance of intestinal epithelial homeostasis and the promotion of mucosal healing. Promotes VEGF-dependent neovascularization. Specific ligand for the alpha-v/beta-3 and alpha-v/beta-5 receptors. Also binds to phosphatidylserine-enriched cell surfaces in a receptor-independent manner. Zona pellucida-binding protein which may play a role in gamete interaction. Appears to participate in the O-acetylation of GD3 ganglioside sialic acid. The protein is Lactadherin (Mfge8) of Rattus norvegicus (Rat).